Here is a 142-residue protein sequence, read N- to C-terminus: Small ribosomal subunit protein uS9 (142 aa).

Belongs to the universal ribosomal protein uS9 family. As to quaternary structure, component of the small ribosomal subunit. Mature ribosomes consist of a small (40S) and a large (60S) subunit. The 40S subunit contains about 32 different proteins and 1 molecule of RNA (18S). The 60S subunit contains 45 different proteins and 3 molecules of RNA (25S, 5.8S and 5S).

It is found in the cytoplasm. In terms of biological role, component of the ribosome, a large ribonucleoprotein complex responsible for the synthesis of proteins in the cell. The small ribosomal subunit (SSU) binds messenger RNAs (mRNAs) and translates the encoded message by selecting cognate aminoacyl-transfer RNA (tRNA) molecules. The large subunit (LSU) contains the ribosomal catalytic site termed the peptidyl transferase center (PTC), which catalyzes the formation of peptide bonds, thereby polymerizing the amino acids delivered by tRNAs into a polypeptide chain. The nascent polypeptides leave the ribosome through a tunnel in the LSU and interact with protein factors that function in enzymatic processing, targeting, and the membrane insertion of nascent chains at the exit of the ribosomal tunnel. This chain is Small ribosomal subunit protein uS9 (RPS16A), found in Candida albicans (strain SC5314 / ATCC MYA-2876) (Yeast).